Here is a 730-residue protein sequence, read N- to C-terminus: Replication restart protein PriA (730 aa).

The region spanning 212 to 378 (LLFHSGFNVW…QNGKYQHLVL (167 aa)) is the Helicase ATP-binding domain. 225–232 (GVTGSGKT) contributes to the ATP binding site. The short motif at 321–324 (DEEH) is the DEAH box element. Cysteine 437, cysteine 440, cysteine 446, cysteine 449, cysteine 464, cysteine 467, cysteine 477, and cysteine 480 together coordinate Zn(2+). A Helicase C-terminal domain is found at 472-640 (TIPRQCGDCG…LPPFTFQALI (169 aa)).

The protein belongs to the helicase family. PriA subfamily. As to quaternary structure, component of the replication restart primosome. It depends on Zn(2+) as a cofactor.

It carries out the reaction Couples ATP hydrolysis with the unwinding of duplex DNA by translocating in the 3'-5' direction.. The enzyme catalyses ATP + H2O = ADP + phosphate + H(+). Its function is as follows. Initiates the restart of stalled replication forks, which reloads the replicative helicase on sites other than the origin of replication. Recognizes and binds to abandoned replication forks and remodels them to uncover a helicase loading site. Promotes assembly of the primosome at these replication forks. This is Replication restart protein PriA from Haemophilus influenzae (strain ATCC 51907 / DSM 11121 / KW20 / Rd).